The sequence spans 256 residues: uncharacterized protein (256 aa).

The signal sequence occupies residues 1–24 (MIKRVNKLVLGISLLFLVISITAG). Cys-25 is lipidated: N-palmitoyl cysteine. Cys-25 carries S-diacylglycerol cysteine lipidation.

It belongs to the staphylococcal tandem lipoprotein family.

It is found in the cell membrane. This is an uncharacterized protein from Staphylococcus aureus (strain NCTC 8325 / PS 47).